A 1068-amino-acid chain; its full sequence is Cytospin-B (1068 aa).

A disordered region spans residues 1–221 (MRSAAKPWNP…VDGTSVSPGD (221 aa)). Arg-2 carries N-myristoyl glycine lipidation. Residues 29–40 (SSGMKSSKSSTS) are compositionally biased toward low complexity. Ser-38 and Ser-55 each carry phosphoserine. A Phosphothreonine modification is found at Thr-78. Ser-112, Ser-131, Ser-134, Ser-137, and Ser-138 each carry phosphoserine. Positions 126–144 (SNPRKSVSSPTSSNTPTPT) are enriched in low complexity. Thr-142 carries the phosphothreonine modification. Basic and acidic residues predominate over residues 154–200 (PKQENEGGEKAALESQVRELLAEAKAKDSEINRLRSELKKYKEKRTL). Residues Ser-218 and Ser-241 each carry the phosphoserine modification. Composition is skewed to polar residues over residues 261–295 (PNSEGAASHTGDSSCPTSITQESSFGSPTGNQMSS), 309–323 (LRTSGSSSSDVTKAS), and 337–367 (ETPSRPLSSTSNPFKSSKCSTAGSSPNSVSE). Residues 261–367 (PNSEGAASHT…AGSSPNSVSE (107 aa)) are disordered. Residues Ser-361, Ser-366, Ser-369, and Ser-425 each carry the phosphoserine modification. The stretch at 579-773 (EVQEMLKVAR…QKELGDVQGH (195 aa)) forms a coiled coil. The segment at 777–796 (VTSRAAPPPVDEEPESSEVD) is disordered. 2 positions are modified to phosphoserine: Ser-847 and Ser-863. Disordered regions lie at residues 859–885 (AAAVSPMQRHSTYSSVRPASRGVTQRL) and 898–922 (GRTETLKPDPHLRKSPSLESLSRPP). Positions 866–875 (QRHSTYSSVR) are enriched in polar residues. A compositionally biased stretch (basic and acidic residues) spans 898 to 909 (GRTETLKPDPHL). A phosphoserine mark is found at Ser-912 and Ser-914. The segment covering 912–922 (SPSLESLSRPP) has biased composition (low complexity). A Calponin-homology (CH) domain is found at 962-1067 (GSKRNALLKW…YVAQIYKYFE (106 aa)).

This sequence belongs to the cytospin-A family. As to expression, highly expressed in testis. Barely detectable in other tissues. Also highly expressed in some cancer cell lines.

The protein resides in the nucleus. The protein localises to the membrane. This Homo sapiens (Human) protein is Cytospin-B (SPECC1).